Here is a 954-residue protein sequence, read N- to C-terminus: Translation initiation factor IF-2 (954 aa).

The span at 56-75 (KAAAPAAPKAPAPAAESRPA) shows a compositional bias: low complexity. The tract at residues 56–355 (KAAAPAAPKA…GVSVPRGDGN (300 aa)) is disordered. Residues 76–87 (APAPGPAAPKAP) are compositionally biased toward pro residues. Composition is skewed to low complexity over residues 88 to 125 (APKVEAPAPAAPAASAPAAPQASSAAPAAPSTGAKPGA) and 138 to 151 (PRQGGSSQGSSAPR). The span at 241 to 254 (PGAPRPGGPRPTPG) shows a compositional bias: pro residues. Positions 269–322 (GRPGGGGRGPGRPGAPGTGGPGGGGGAPAGGGFGKGGRGRGGTQGAFGKGGAGR) are enriched in gly residues. Residues 323–332 (GKQRKSKRAK) are compositionally biased toward basic residues. In terms of domain architecture, tr-type G spans 447-618 (PRAPVVTVMG…AVLLTADAAL (172 aa)). Residues 456–463 (GHVDHGKT) are G1. Residue 456–463 (GHVDHGKT) participates in GTP binding. The segment at 481-485 (GITQH) is G2. The segment at 506 to 509 (DTPG) is G3. Residues 506-510 (DTPGH) and 560-563 (NKID) each bind GTP. The interval 560–563 (NKID) is G4. The tract at residues 596–598 (SAR) is G5.

This sequence belongs to the TRAFAC class translation factor GTPase superfamily. Classic translation factor GTPase family. IF-2 subfamily.

It localises to the cytoplasm. Its function is as follows. One of the essential components for the initiation of protein synthesis. Protects formylmethionyl-tRNA from spontaneous hydrolysis and promotes its binding to the 30S ribosomal subunits. Also involved in the hydrolysis of GTP during the formation of the 70S ribosomal complex. The sequence is that of Translation initiation factor IF-2 from Pseudarthrobacter chlorophenolicus (strain ATCC 700700 / DSM 12829 / CIP 107037 / JCM 12360 / KCTC 9906 / NCIMB 13794 / A6) (Arthrobacter chlorophenolicus).